We begin with the raw amino-acid sequence, 423 residues long: Glycine amidinotransferase, mitochondrial (423 aa).

The transit peptide at 1 to 43 (MLRVRCLRGGSRGAEALHYIGSRLGRTVTGWVQRTFQSTQAAT) directs the protein to the mitochondrion. 2 positions are modified to phosphoserine: Ser-46 and Ser-49. Residue Asp-170 participates in arginine binding. Catalysis depends on residues Asp-254 and His-303. Residues Asp-305, Arg-322, Ser-354, and Ser-355 each contribute to the arginine site. Lys-385 bears the N6-acetyllysine mark. Cys-407 functions as the Amidino-cysteine intermediate in the catalytic mechanism.

The protein belongs to the amidinotransferase family. Homodimer. Kidney. Expressed biallelically in placenta.

It is found in the mitochondrion inner membrane. The enzyme catalyses L-arginine + glycine = guanidinoacetate + L-ornithine. The catalysed reaction is 4-aminobutanoate + L-arginine = 4-guanidinobutanoate + L-ornithine. It carries out the reaction beta-alanine + L-arginine = 3-guanidinopropanoate + L-ornithine. It catalyses the reaction taurine + L-arginine = taurocyamine + L-ornithine. The protein operates within amine and polyamine biosynthesis; creatine biosynthesis; creatine from L-arginine and glycine: step 1/2. Its function is as follows. Transamidinase that catalyzes the transfer of the amidino group of L-arginine onto the amino moiety of acceptor metabolites such as glycine, beta-alanine, gamma-aminobutyric acid (GABA) and taurine yielding the corresponding guanidine derivatives. Catalyzes the rate-limiting step of creatine biosynthesis, namely the transfer of the amidino group from L-arginine to glycine to generate guanidinoacetate, which is then methylated by GAMT to form creatine. Provides creatine as a source for ATP generation in tissues with high energy demands, in particular skeletal muscle, heart and brain. This is Glycine amidinotransferase, mitochondrial (GATM) from Sus scrofa (Pig).